The chain runs to 331 residues: CRISPR-associated endonuclease Cas1 (331 aa).

Residues glutamate 158, histidine 223, and aspartate 238 each contribute to the Mn(2+) site.

This sequence belongs to the CRISPR-associated endonuclease Cas1 family. As to quaternary structure, homodimer, forms a heterotetramer with a Cas2 homodimer. Mg(2+) is required as a cofactor. Mn(2+) serves as cofactor.

Functionally, CRISPR (clustered regularly interspaced short palindromic repeat), is an adaptive immune system that provides protection against mobile genetic elements (viruses, transposable elements and conjugative plasmids). CRISPR clusters contain spacers, sequences complementary to antecedent mobile elements, and target invading nucleic acids. CRISPR clusters are transcribed and processed into CRISPR RNA (crRNA). Acts as a dsDNA endonuclease. Involved in the integration of spacer DNA into the CRISPR cassette. Plasmid targeted by CRISPR locus P1 transform wild-type cells very poorly. The sequence is that of CRISPR-associated endonuclease Cas1 from Haloferax volcanii (strain ATCC 29605 / DSM 3757 / JCM 8879 / NBRC 14742 / NCIMB 2012 / VKM B-1768 / DS2) (Halobacterium volcanii).